A 216-amino-acid polypeptide reads, in one-letter code: Probable nicotinate-nucleotide adenylyltransferase (216 aa).

The protein belongs to the NadD family.

It carries out the reaction nicotinate beta-D-ribonucleotide + ATP + H(+) = deamido-NAD(+) + diphosphate. Its pathway is cofactor biosynthesis; NAD(+) biosynthesis; deamido-NAD(+) from nicotinate D-ribonucleotide: step 1/1. Catalyzes the reversible adenylation of nicotinate mononucleotide (NaMN) to nicotinic acid adenine dinucleotide (NaAD). This is Probable nicotinate-nucleotide adenylyltransferase from Marinobacter nauticus (strain ATCC 700491 / DSM 11845 / VT8) (Marinobacter aquaeolei).